Here is a 206-residue protein sequence, read N- to C-terminus: High frequency lysogenization protein HflD homolog (206 aa).

It belongs to the HflD family.

The protein localises to the cytoplasm. It is found in the cell inner membrane. The polypeptide is High frequency lysogenization protein HflD homolog (Pseudomonas aeruginosa (strain LESB58)).